The chain runs to 1445 residues: 3'-5' RNA helicase YTHDC2 (1445 aa).

The interval 1-50 (MSRPSSVSPRPPAPSGGGTGGGGGGSGGGGGGGGGGPASCGPGGGGRAKG) is disordered. Gly residues predominate over residues 15-48 (SGGGTGGGGGGSGGGGGGGGGGPASCGPGGGGRA). The region spanning 53-121 (DIRIDEEVKI…NRYLTVKKKD (69 aa)) is the R3H domain. The 167-residue stretch at 218–384 (VKIIKENKVV…FGSCPVIYIQ (167 aa)) folds into the Helicase ATP-binding domain. 231–238 (GETGSGKT) serves as a coordination point for ATP. The short motif at 331-334 (DEVH) is the DEAH box element. ANK repeat units follow at residues 521–553 (TSAT…SKAS) and 554–586 (NGWM…FGNL). The region spanning 627 to 799 (LLYNICHSCD…ELCLHTKLLA (173 aa)) is the Helicase C-terminal domain. Phosphoserine is present on residues serine 1104, serine 1105, and serine 1107. The segment covering 1179 to 1189 (EQSAGLQQPSG) has biased composition (polar residues). Residues 1179 to 1303 (EQSAGLQQPS…SPSPRPNMPI (125 aa)) are disordered. The segment covering 1246 to 1264 (KYKDRGILHPKRSTDDRSD) has biased composition (basic and acidic residues). Residues 1265-1279 (QSSVKSTDSSSYPSP) are compositionally biased toward low complexity. Residues serine 1278, serine 1282, and serine 1296 each carry the phosphoserine modification. Residues 1303-1433 (IRYFIMKSSN…QVGEQLLQLW (131 aa)) form the YTH domain. Residues 1309 to 1311 (KSS), tryptophan 1325, and tryptophan 1375 contribute to the RNA site.

This sequence belongs to the DEAD box helicase family. DEAH subfamily. Interacts with MEIOC; binds transcripts that regulate the mitotic cell cycle inhibiting progression into metaphase, thereby allowing meiotic prophase to proceed normally. Interacts (via ANK repeats) with XRN1. Interacts with ZCCHC4. Associates with the small ribosomal subunit. Interacts with RBM46. In terms of tissue distribution, present in male and female germ cells (at protein level). Highly expressed in testis. Not detected in spermatogonia next to the tubule wall but is strongly expressed in spermatocytes, suggesting that it is up-regulated in germ cells upon entry into meiosis (at protein level).

Its subcellular location is the cytoplasm. The protein localises to the perinuclear region. The catalysed reaction is ATP + H2O = ADP + phosphate + H(+). In terms of biological role, 3'-5' RNA helicase that plays a key role in the male and female germline by promoting transition from mitotic to meiotic divisions in stem cells. Specifically recognizes and binds N6-methyladenosine (m6A)-containing RNAs, a modification present at internal sites of mRNAs and some non-coding RNAs that plays a role in the efficiency of RNA processing and stability. Essential for ensuring a successful progression of the meiotic program in the germline by regulating the level of m6A-containing RNAs. Acts by binding and promoting degradation of m6A-containing mRNAs: the 3'-5' RNA helicase activity is required for this process and RNA degradation may be mediated by XRN1 exoribonuclease. Required for both spermatogenesis and oogenesis. This chain is 3'-5' RNA helicase YTHDC2, found in Mus musculus (Mouse).